Here is a 529-residue protein sequence, read N- to C-terminus: Snake venom 5'-nucleotidase (529 aa).

Residue G1 is a signal peptide. 2 residues coordinate Zn(2+): D12 and H14. Residues C27 and C32 are joined by a disulfide bond. Positions 60, 92, 195, and 218 each coordinate Zn(2+). 2 N-linked (GlcNAc...) asparagine glycosylation sites follow: N308 and N322. 2 disulfide bridges follow: C328–C333 and C340–C362. Position 329 (R329) interacts with AMP. Residues N365, R370, and F393 each contribute to the AMP site. Cysteines 452 and 455 form a disulfide. AMP contacts are provided by F476 and D482. A lipid anchor (GPI-anchor amidated serine) is attached at S525. The propeptide at 526-529 (AGSL) is removed in mature form.

This sequence belongs to the 5'-nucleotidase family. Zn(2+) serves as cofactor. Post-translationally, venom 5'-nucleotidases (or a part thereof) may be released into the venom via exosome-like vesicles. They may be attached via a GPI anchor to the membrane of these vesicles. Soluble forms of 5'-nucleotidase might be released by cleavage of the ectodomain in the exosome-like vesicles or venom gland cells. Expressed by the venom gland.

It is found in the membrane. The catalysed reaction is a ribonucleoside 5'-phosphate + H2O = a ribonucleoside + phosphate. Hydrolyzes nucleotides into nucleosides. Snake venom 5'-nucleotidases are widely distributed among venomous snake taxa, but there is a lack of information about their biological activities. They have been shown to inhibit platelet aggregation. This effect may be due to the liberation of inhibitory AMP or adenosine by its action on ADP released upon initiation of aggregation. Venom 5'-nucleotidases are also known to synergistically act in vivo with other toxins like ADPases, phospholipases, and disintegrins to exert a more pronounced anti-coagulant effect. The polypeptide is Snake venom 5'-nucleotidase (Naja atra (Chinese cobra)).